The primary structure comprises 291 residues: ATP synthase gamma chain (291 aa).

It belongs to the ATPase gamma chain family. As to quaternary structure, F-type ATPases have 2 components, CF(1) - the catalytic core - and CF(0) - the membrane proton channel. CF(1) has five subunits: alpha(3), beta(3), gamma(1), delta(1), epsilon(1). CF(0) has three main subunits: a, b and c.

It is found in the cell inner membrane. In terms of biological role, produces ATP from ADP in the presence of a proton gradient across the membrane. The gamma chain is believed to be important in regulating ATPase activity and the flow of protons through the CF(0) complex. This chain is ATP synthase gamma chain, found in Variovorax paradoxus (strain S110).